The chain runs to 1557 residues: Probable kinase PglW (1557 aa).

Residues 12-130 enclose the NERD domain; the sequence is SEFEHERRGL…VAEAVCFTDN (119 aa). Protein kinase domains lie at 195-490 and 530-816; these read ELER…LEVV and WEVR…KVFL. Residues 536-544 and Lys564 contribute to the ATP site; that span reads LGTGSTSRA. 2 disordered regions span residues 615–634 and 821–861; these read DERD…RRRE and TVPS…QRDR. The span at 830–849 shows a compositional bias: low complexity; that stretch reads PAAPADGAAPAEGAAAGIAD.

The protein belongs to the protein kinase superfamily. Ser/Thr protein kinase family.

In terms of biological role, BREX systems (bacteriophage exclusion) provide immunity against bacteriophage. Part of a type 2 BREX system. Previously called the phage growth limitation (Pgl) system, it confers protection against bacteriophage phiC31. The bacteria allows one cycle of phage infection, but subsequent cycles are impaired, protecting the original bacterial colony. The system undergoes high rates (10(-3) to 10(-4)) of phase reversion, i.e. loss and regain of phiC31 resistance. When the pglW-pglX-pglY-pglZ genes are transformed into a susceptible S.lividans (strain 1326) they confer resistance to infection by phage phiC31 and phiBT1; all 4 genes are necessary. The proteins has kinase domains and might bind DNA. Functionally, autophosphorylates when synthesized in vitro, cannot be expressed in E.coli. In Streptomyces coelicolor (strain ATCC BAA-471 / A3(2) / M145), this protein is Probable kinase PglW.